The sequence spans 195 residues: Imidazoleglycerol-phosphate dehydratase (195 aa).

Belongs to the imidazoleglycerol-phosphate dehydratase family.

It localises to the cytoplasm. It carries out the reaction D-erythro-1-(imidazol-4-yl)glycerol 3-phosphate = 3-(imidazol-4-yl)-2-oxopropyl phosphate + H2O. It participates in amino-acid biosynthesis; L-histidine biosynthesis; L-histidine from 5-phospho-alpha-D-ribose 1-diphosphate: step 6/9. In Paraburkholderia phytofirmans (strain DSM 17436 / LMG 22146 / PsJN) (Burkholderia phytofirmans), this protein is Imidazoleglycerol-phosphate dehydratase.